The following is a 165-amino-acid chain: Putative pre-16S rRNA nuclease (165 aa).

The protein belongs to the YqgF nuclease family.

The protein resides in the cytoplasm. Functionally, could be a nuclease involved in processing of the 5'-end of pre-16S rRNA. The polypeptide is Putative pre-16S rRNA nuclease (Brucella anthropi (strain ATCC 49188 / DSM 6882 / CCUG 24695 / JCM 21032 / LMG 3331 / NBRC 15819 / NCTC 12168 / Alc 37) (Ochrobactrum anthropi)).